The following is a 321-amino-acid chain: uncharacterized protein (321 aa).

The span at 1–12 shows a compositional bias: basic residues; it reads MSMFLKKQKKTK. Disordered stretches follow at residues 1–59 and 71–289; these read MSMF…MRKT and EDCT…GPED. A compositionally biased stretch (basic and acidic residues) spans 50-59; the sequence is DGIKETMRKT. The span at 99–115 shows a compositional bias: acidic residues; that stretch reads DDSDSESSEDGGEDDEE. Residues 156-175 show a composition bias toward low complexity; sequence SDSSSSSSSSSDSESSSSSD. The segment covering 179–189 has biased composition (basic and acidic residues); it reads DGDRSTPEPDI. Positions 231–242 are enriched in low complexity; sequence EPSPLRAAAAAA.

This is an uncharacterized protein from Equus caballus (Horse).